A 225-amino-acid chain; its full sequence is 2-amino-5-formylamino-6-ribosylaminopyrimidin-4(3H)-one 5'-monophosphate deformylase (225 aa).

4 residues coordinate Fe cation: Glu28, His30, Asp39, and His107.

Belongs to the creatininase superfamily. FAPy deformylase family. Homodimer. It depends on Fe(2+) as a cofactor. Requires Zn(2+) as cofactor.

The enzyme catalyses 2-amino-5-formylamino-6-(5-phospho-D-ribosylamino)pyrimidin-4(3H)-one + H2O = 2,5-diamino-6-(1-D-ribosylamino)pyrimidin-4(3H)-one 5'-phosphate + formate + H(+). It functions in the pathway cofactor biosynthesis; coenzyme F420 biosynthesis. Its pathway is cofactor biosynthesis; riboflavin biosynthesis. Its function is as follows. Catalyzes the hydrolysis of the formamide of 2-amino-5-formylamino-6-ribosylamino-4(3H)-pyrimidinone 5'-monophosphate (FAPy) to form 2,5-diamino-6-ribosylamino-4(3H)-pyrimidinone 5'-phosphate (APy). The chain is 2-amino-5-formylamino-6-ribosylaminopyrimidin-4(3H)-one 5'-monophosphate deformylase from Methanocaldococcus fervens (strain DSM 4213 / JCM 15782 / AG86) (Methanococcus fervens).